The following is a 498-amino-acid chain: Lysine--tRNA ligase (498 aa).

Mg(2+) is bound by residues Glu-401 and Glu-408.

This sequence belongs to the class-II aminoacyl-tRNA synthetase family. Homodimer. It depends on Mg(2+) as a cofactor.

The protein localises to the cytoplasm. The catalysed reaction is tRNA(Lys) + L-lysine + ATP = L-lysyl-tRNA(Lys) + AMP + diphosphate. In Dehalococcoides mccartyi (strain CBDB1), this protein is Lysine--tRNA ligase.